Reading from the N-terminus, the 193-residue chain is Recombination protein RecR (193 aa).

The segment at 61–76 adopts a C4-type zinc-finger fold; it reads CTSCNALSESEVCEIC. Positions 84 to 170 constitute a Toprim domain; that stretch reads SQLCMVLHPR…TFTKIAQGVP (87 aa).

Belongs to the RecR family.

May play a role in DNA repair. It seems to be involved in an RecBC-independent recombinational process of DNA repair. It may act with RecF and RecO. The polypeptide is Recombination protein RecR (Helicobacter pylori (strain HPAG1)).